The primary structure comprises 346 residues: D-fructose 1,6-bisphosphatase class 2/sedoheptulose 1,7-bisphosphatase (346 aa).

Residues D33, E57, D97, and E100 each coordinate Mn(2+). Residues 100–102, Y131, 176–178, and 198–200 contribute to the substrate site; these read EGT, RDR, and DGD. Residue E225 coordinates Mn(2+).

It belongs to the FBPase class 2 family. As to quaternary structure, homotetramer. The cofactor is Mn(2+).

It catalyses the reaction beta-D-fructose 1,6-bisphosphate + H2O = beta-D-fructose 6-phosphate + phosphate. The enzyme catalyses D-sedoheptulose 1,7-bisphosphate + H2O = D-sedoheptulose 7-phosphate + phosphate. Its pathway is carbohydrate biosynthesis; Calvin cycle. Catalyzes the hydrolysis of fructose 1,6-bisphosphate (Fru 1,6-P2) and sedoheptulose 1,7-bisphosphate (Sed 1,7-P2) to fructose 6-phosphate and sedoheptulose 7-phosphate, respectively. In Gloeobacter violaceus (strain ATCC 29082 / PCC 7421), this protein is D-fructose 1,6-bisphosphatase class 2/sedoheptulose 1,7-bisphosphatase.